We begin with the raw amino-acid sequence, 502 residues long: ATP synthase subunit alpha (502 aa).

The segment at 115–139 (VDGLGPVETTETRPIESPAPGVMDR) is disordered. ATP is bound at residue 169 to 176 (GDRQTGKT).

The protein belongs to the ATPase alpha/beta chains family. F-type ATPases have 2 components, CF(1) - the catalytic core - and CF(0) - the membrane proton channel. CF(1) has five subunits: alpha(3), beta(3), gamma(1), delta(1), epsilon(1). CF(0) has three main subunits: a(1), b(2) and c(9-12). The alpha and beta chains form an alternating ring which encloses part of the gamma chain. CF(1) is attached to CF(0) by a central stalk formed by the gamma and epsilon chains, while a peripheral stalk is formed by the delta and b chains.

The protein resides in the cell membrane. It carries out the reaction ATP + H2O + 4 H(+)(in) = ADP + phosphate + 5 H(+)(out). Functionally, produces ATP from ADP in the presence of a proton gradient across the membrane. The alpha chain is a regulatory subunit. In Geobacillus thermodenitrificans (strain NG80-2), this protein is ATP synthase subunit alpha.